Consider the following 1135-residue polypeptide: Envelopment polyprotein (1135 aa).

The signal sequence occupies residues 1–35 (MRILKLLELVVKVSLFTIALSSVLLAFLTFRATDA). Residues 36-314 (KVEIIRGDHP…KYSKSIYKQT (279 aa)) lie on the Lumenal side of the membrane. The short motif at 41-43 (RGD) is the Cell attachment site element. Residue N116 is glycosylated (N-linked (GlcNAc...) asparagine; by host). A disulfide bridge connects residues C122 and C156. Residues 177–195 (LDNKRHFSVGTNFFIPESL) are non-covalent dimerization. A glycan (N-linked (GlcNAc...) asparagine; by host) is linked at N210. The cysteines at positions 224 and 285 are disulfide-linked. Residues 315–366 (ACINFSWIRLILIALLIYFPIRWLVNKTTKPLFLWYDLMGLITYPVLLLINC) form a helical membrane-spanning segment. The Cytoplasmic segment spans residues 367-484 (LWKYFPFKCS…VPGCPFLVTS (118 aa)). Residues 437 to 484 (LSLSLLKFVTEILIGLVILSQIPMSMAQTTQCLSGCFYVPGCPFLVTS) form a signal for signal peptide peptidase region. Over 485 to 1067 (KFEKCPEKDQ…YFGSFFDTIR (583 aa)) the chain is Lumenal. 3 N-linked (GlcNAc...) asparagine; by host glycosylation sites follow: N588, N605, and N980. A helical membrane pass occupies residues 1068-1088 (VVLLIAFIFLVIYFCSILTSI). At 1089-1135 (CKGYVKHKSYKSRSKIEDDDEPEIKAPMLMKDTMTRRRPPMDFSHLV) the chain is on the cytoplasmic side.

This sequence belongs to the tospovirus envelope glycoprotein family. As to quaternary structure, homodimer; disulfide-linked. Heterodimer with Glycoprotein C. Interacts with nucleoprotein. In terms of assembly, heterodimer with Glycoprotein N. Interacts with nucleoprotein. Specific enzymatic cleavages in vivo yield mature proteins including Glycoprotein N and Glycoprotein C. Post-translationally, glycosylated with O-linked glycans. Glycosylation is essential for proper subcellular location. In terms of processing, cleaved at acidic pH.

Its subcellular location is the virion membrane. The protein resides in the host Golgi apparatus membrane. The protein localises to the host endoplasmic reticulum membrane. Its function is as follows. Forms the spikes present at the surface of the virion together with Glycoprotein C. They are able to attach the virion to a cell receptor and to promote fusion of membranes after endocytosis of the virion. Plays a role in virus binding and/or entry into the vector midgut. In terms of biological role, forms the spikes present at the surface of the virion together with Glycoprotein N. They are able to attach the virion to a cell receptor and to promote fusion of membranes after endocytosis of the virion. Probable class II fusion protein. The polypeptide is Envelopment polyprotein (GP) (Frankliniella occidentalis (Western flower thrips)).